Here is a 283-residue protein sequence, read N- to C-terminus: Daunorubicin resistance ABC transporter permease protein DrrB1 (283 aa).

An ABC transmembrane type-2 domain is found at 53 to 280; sequence VQLIDIVLMP…PLTMRLYRNK (228 aa). 6 helical membrane passes run 58-78, 85-105, 150-170, 171-191, 198-218, and 252-272; these read IVLM…GAFA, LQFY…VYTG, VFLG…VVGA, MLVL…LGVV, VSGT…IFVM, and FWDV…FAPL.

It belongs to the ABC-2 integral membrane protein family. As to quaternary structure, the complex is probably composed of two ATP-binding proteins (DrrA1) and two transmembrane proteins (DrrB1).

It is found in the cell membrane. Part of the ABC transporter complex DrrA1B1 involved in daunorubicin efflux. Responsible for the translocation of the substrate across the membrane. Confers self-resistance to daunorubicin, an antibiotic produced by S.coeruleorubidus. This Streptomyces coeruleorubidus protein is Daunorubicin resistance ABC transporter permease protein DrrB1.